The following is a 421-amino-acid chain: MPALKIPLFKMKDMVLILCLLKMSSAVPAFPRQPGTPGVASLSLETMRQLGSLQGLNMLSQYSRFGFGKSFNSLWMHGLLPPHSSFQWMRPREHETQQYEYSLPVHPPPLPSQPSLQPQQPGQKPFLQPTVVTSIQNPVQKGVPQPPIYQGHPPLQQVEGPMVQQQVAPSEKPPEAELPGLDFADPQDPSMFPIARLISQGPVPQDKPSPLYPGMFYMSYGANQLNSPARLGILSSEEMAGGRGGPLAYGAMFPGFGGMRPNLGGMPPNSAKGGDFTLEFDSPAAGTKGPEKGEGGAEGSPVAEANTADPESPALFSEVASGVLGGLLANPKGKIPNLARGPAGRSRGPPGVTPADADPLMTPGLADAYETYGADETTTLGLQEEMTMDSTATPYSEHTSMPGNKAQQPQIKRDAWRFQEP.

The first 26 residues, 1-26, serve as a signal peptide directing secretion; that stretch reads MPALKIPLFKMKDMVLILCLLKMSSA. The residue at position 37 (proline 37) is a Hydroxyproline. The residue at position 43 (serine 43) is a Phosphoserine. 3 disordered regions span residues 104–126, 264–311, and 333–421; these read PVHP…QKPF, GGMP…ADPE, and GKIP…FQEP. A glycan (O-linked (GalNAc...) serine) is linked at serine 112. Over residues 113 to 125 the composition is skewed to low complexity; that stretch reads QPSLQPQQPGQKP. The segment covering 339–350 has biased composition (low complexity); it reads ARGPAGRSRGPP. Residues 388–410 are compositionally biased toward polar residues; the sequence is MDSTATPYSEHTSMPGNKAQQPQ. Positions 411–421 are enriched in basic and acidic residues; it reads IKRDAWRFQEP.

Belongs to the ameloblastin family. In terms of tissue distribution, ameloblast-specific. Located at the Tomes processes of secretory ameloblasts and in the sheath space between rod-interrod enamel.

The protein resides in the secreted. It is found in the extracellular space. Its subcellular location is the extracellular matrix. Involved in the mineralization and structural organization of enamel. In Sus scrofa (Pig), this protein is Ameloblastin (AMBN).